Here is an 83-residue protein sequence, read N- to C-terminus: Small ribosomal subunit protein bS16 (83 aa).

The protein belongs to the bacterial ribosomal protein bS16 family.

This chain is Small ribosomal subunit protein bS16, found in Aromatoleum aromaticum (strain DSM 19018 / LMG 30748 / EbN1) (Azoarcus sp. (strain EbN1)).